Here is a 268-residue protein sequence, read N- to C-terminus: Undecaprenyl-diphosphatase (268 aa).

The next 8 membrane-spanning stretches (helical) occupy residues 3-23 (VFNL…EFIP), 46-66 (FEVL…SAKL), 84-104 (FGIL…HGFI), 107-127 (VLFE…FILL), 144-164 (YPLP…IPGV), 184-204 (AAEF…AYDL), 218-238 (LIGV…RYLL), and 248-268 (LFGW…LVWG).

Belongs to the UppP family.

The protein localises to the cell inner membrane. The enzyme catalyses di-trans,octa-cis-undecaprenyl diphosphate + H2O = di-trans,octa-cis-undecaprenyl phosphate + phosphate + H(+). Catalyzes the dephosphorylation of undecaprenyl diphosphate (UPP). Confers resistance to bacitracin. This Brucella anthropi (strain ATCC 49188 / DSM 6882 / CCUG 24695 / JCM 21032 / LMG 3331 / NBRC 15819 / NCTC 12168 / Alc 37) (Ochrobactrum anthropi) protein is Undecaprenyl-diphosphatase.